The chain runs to 52 residues: Large ribosomal subunit protein eL39 (52 aa).

The protein belongs to the eukaryotic ribosomal protein eL39 family.

The chain is Large ribosomal subunit protein eL39 (RPL39) from Tetrahymena thermophila (strain SB210).